The following is a 225-amino-acid chain: Transmembrane protein 225 (225 aa).

At Met-1–Ser-8 the chain is on the cytoplasmic side. Residues Ile-9–Thr-29 traverse the membrane as a helical segment. The Extracellular portion of the chain corresponds to Leu-30 to Ser-72. Residues Ser-73–Pro-93 form a helical membrane-spanning segment. Residues Gln-94–Gln-99 are Cytoplasmic-facing. The helical transmembrane segment at Leu-100 to Tyr-120 threads the bilayer. The Extracellular portion of the chain corresponds to His-121–Arg-136. Residues Ile-137–Leu-157 form a helical membrane-spanning segment. Residues Ser-158–Leu-225 are Cytoplasmic-facing. An RVxF motif is present at residues Arg-219 to Trp-223.

Interacts (via RVxF motif) with PPP1CC.

It localises to the cytoplasmic vesicle. The protein resides in the secretory vesicle. The protein localises to the acrosome membrane. In terms of biological role, probably inhibits protein phosphatase 1 (PP1) in sperm via binding to catalytic subunit PPP1CC. In Homo sapiens (Human), this protein is Transmembrane protein 225 (TMEM225).